The sequence spans 193 residues: Large ribosomal subunit protein uL5 (193 aa).

Belongs to the universal ribosomal protein uL5 family. Part of the 50S ribosomal subunit; part of the 5S rRNA/L5/L18/L25 subcomplex. Contacts the 5S rRNA and the P site tRNA. Forms a bridge to the 30S subunit in the 70S ribosome.

Functionally, this is one of the proteins that bind and probably mediate the attachment of the 5S RNA into the large ribosomal subunit, where it forms part of the central protuberance. In the 70S ribosome it contacts protein S13 of the 30S subunit (bridge B1b), connecting the 2 subunits; this bridge is implicated in subunit movement. Contacts the P site tRNA; the 5S rRNA and some of its associated proteins might help stabilize positioning of ribosome-bound tRNAs. The sequence is that of Large ribosomal subunit protein uL5 from Corynebacterium urealyticum (strain ATCC 43042 / DSM 7109).